Consider the following 160-residue polypeptide: Afimbrial adhesin AFA-III (160 aa).

Positions 1 to 21 (MKKLAIMAAASMVFAVSSAHA) are cleaved as a signal peptide. Positions 22 to 75 (GFTPSGTTGTTKLTVTEECQVRVGDLTVAKTRGQLTDAAPIGPVTVQALGCNAR) are receptor-binding.

This sequence belongs to the Dr-adhesin family.

Its subcellular location is the fimbrium. Hemagglutinins of uropathogenic E.coli mediate adherence to the upper urinary tract. These adhesins bind to the Dr blood group antigen and also agglutinate human erythrocytes in the presence of D-mannose (mannose-resistant hemagglutination (MRHA)). The sequence is that of Afimbrial adhesin AFA-III (afaE3) from Escherichia coli.